Here is a 25-residue protein sequence, read N- to C-terminus: Neuromedin-U-25 (25 aa).

Asn25 carries the asparagine amide modification.

It belongs to the NmU family.

Its subcellular location is the secreted. Stimulates uterine smooth muscle contraction and causes selective vasoconstriction. The sequence is that of Neuromedin-U-25 (NMU) from Oryctolagus cuniculus (Rabbit).